The sequence spans 243 residues: Probable 2-phosphosulfolactate phosphatase (243 aa).

Belongs to the ComB family. The cofactor is Mg(2+).

It catalyses the reaction (2R)-O-phospho-3-sulfolactate + H2O = (2R)-3-sulfolactate + phosphate. The chain is Probable 2-phosphosulfolactate phosphatase from Prochlorococcus marinus (strain SARG / CCMP1375 / SS120).